Consider the following 288-residue polypeptide: Release factor glutamine methyltransferase (288 aa).

D142 and N186 together coordinate S-adenosyl-L-methionine. N186–Y189 is a substrate binding site.

The protein belongs to the protein N5-glutamine methyltransferase family. PrmC subfamily.

It catalyses the reaction L-glutaminyl-[peptide chain release factor] + S-adenosyl-L-methionine = N(5)-methyl-L-glutaminyl-[peptide chain release factor] + S-adenosyl-L-homocysteine + H(+). Methylates the class 1 translation termination release factors RF1/PrfA and RF2/PrfB on the glutamine residue of the universally conserved GGQ motif. This chain is Release factor glutamine methyltransferase, found in Mycobacterium leprae (strain TN).